The chain runs to 442 residues: Aspartate--tRNA(Asp/Asn) ligase (442 aa).

Glu172 contacts L-aspartate. Positions 194-197 are aspartate; the sequence is QFYK. Residue Arg216 coordinates L-aspartate. ATP is bound by residues 216–218, 224–226, and Glu365; these read RAE and RHL. The Mg(2+) site is built by Glu365 and Thr368. 2 residues coordinate L-aspartate: Thr368 and Arg372. 413-416 serves as a coordination point for ATP; sequence GLER.

Belongs to the class-II aminoacyl-tRNA synthetase family. Type 2 subfamily. In terms of assembly, homodimer. Requires Mg(2+) as cofactor.

It localises to the cytoplasm. The catalysed reaction is tRNA(Asx) + L-aspartate + ATP = L-aspartyl-tRNA(Asx) + AMP + diphosphate. In terms of biological role, aspartyl-tRNA synthetase with relaxed tRNA specificity since it is able to aspartylate not only its cognate tRNA(Asp) but also tRNA(Asn). Reaction proceeds in two steps: L-aspartate is first activated by ATP to form Asp-AMP and then transferred to the acceptor end of tRNA(Asp/Asn). The protein is Aspartate--tRNA(Asp/Asn) ligase (aspS) of Aeropyrum pernix (strain ATCC 700893 / DSM 11879 / JCM 9820 / NBRC 100138 / K1).